A 196-amino-acid polypeptide reads, in one-letter code: Proteasome subunit beta 1 (196 aa).

The propeptide at 1-6 is removed in mature form; by autocatalysis; it reads MEELPA. The Nucleophile role is filled by Thr-7.

Belongs to the peptidase T1B family. As to quaternary structure, the 20S proteasome core is composed of 14 alpha and 14 beta subunits that assemble into four stacked heptameric rings, resulting in a barrel-shaped structure. The two inner rings, each composed of seven catalytic beta subunits, are sandwiched by two outer rings, each composed of seven alpha subunits. The catalytic chamber with the active sites is on the inside of the barrel. Has a gated structure, the ends of the cylinder being occluded by the N-termini of the alpha-subunits. Is capped at one or both ends by the proteasome regulatory ATPase, PAN.

It localises to the cytoplasm. It carries out the reaction Cleavage of peptide bonds with very broad specificity.. Its activity is regulated as follows. The formation of the proteasomal ATPase PAN-20S proteasome complex, via the docking of the C-termini of PAN into the intersubunit pockets in the alpha-rings, triggers opening of the gate for substrate entry. Interconversion between the open-gate and close-gate conformations leads to a dynamic regulation of the 20S proteasome proteolysis activity. In terms of biological role, component of the proteasome core, a large protease complex with broad specificity involved in protein degradation. The chain is Proteasome subunit beta 1 from Saccharolobus islandicus (strain Y.N.15.51 / Yellowstone #2) (Sulfolobus islandicus).